Here is a 321-residue protein sequence, read N- to C-terminus: Glucokinase (321 aa).

8 to 13 (GDVGGT) is an ATP binding site.

The protein belongs to the bacterial glucokinase family.

The protein resides in the cytoplasm. It catalyses the reaction D-glucose + ATP = D-glucose 6-phosphate + ADP + H(+). This Salmonella paratyphi B (strain ATCC BAA-1250 / SPB7) protein is Glucokinase.